Here is a 702-residue protein sequence, read N- to C-terminus: Amino-acid racemase (702 aa).

At 1–12 (MKHRANGIDLFR) the chain is on the cytoplasmic side. Residues 13-33 (IFAATMVVAIHTFPFQSIAPF) form a helical membrane-spanning segment. Residues 34–39 (LDEVIT) are Extracellular-facing. Residues 40-60 (LTVFRVAVPFFFMITGYFLLG) traverse the membrane as a helical segment. Over 61–77 (RLSLNFSYNNNQRVKKY) the chain is Cytoplasmic. A helical transmembrane segment spans residues 78 to 98 (LYKIGMIYLYSILLYFPLSLL). Topologically, residues 99–120 (NGTISLKMNILLLLKVFIFDGT) are extracellular. A helical membrane pass occupies residues 121 to 141 (FYHLWYFPASIIGTILVTLLL). Position 142 (Arg142) is a topological domain, cytoplasmic. A helical membrane pass occupies residues 143-163 (SIGFKLTVAFSTCLYLVGLGG). The Extracellular segment spans residues 164-191 (DSWYGITNQVPLLNKLYTFIFSWSDYTR). Residues 192-212 (SGVFFTPVFLCLGIFAYRVSK) traverse the membrane as a helical segment. The Cytoplasmic portion of the chain corresponds to 213–218 (KLTASK). Residues 219 to 239 (ILNLLFYVFIIGMTFESIFLH) traverse the membrane as a helical segment. The Extracellular portion of the chain corresponds to 240 to 248 (RFTNVKHDS). The helical transmembrane segment at 249 to 269 (MYLLLPSCALILFLMLLNWQP) threads the bilayer. The Cytoplasmic portion of the chain corresponds to 270 to 276 (KLKVKES). Residues 277–297 (ADLTLLVYILHPLVIVIVHSI) traverse the membrane as a helical segment. Over 298–307 (SKYIPILKNS) the chain is Extracellular. The helical transmembrane segment at 308 to 328 (LLNFLLVVVCSFILAQLLLNL) threads the bilayer. The Cytoplasmic segment spans residues 329 to 702 (KRKLRVSKQK…LGSRLGTELN (374 aa)). The tract at residues 337 to 702 (QKIPFERASK…LGSRLGTELN (366 aa)) is racemase. Lys375 acts as the Proton acceptor in catalysis. The residue at position 375 (Lys375) is an N6-(pyridoxal phosphate)lysine. Position 469 (Arg469) interacts with substrate. Catalysis depends on Tyr601, which acts as the Proton acceptor. Residue Met650 coordinates substrate.

This sequence in the N-terminal section; belongs to the acyltransferase 3 family. It in the C-terminal section; belongs to the alanine racemase family. It depends on pyridoxal 5'-phosphate as a cofactor.

It localises to the cell membrane. This chain is Amino-acid racemase (vanTE), found in Enterococcus faecalis (Streptococcus faecalis).